Reading from the N-terminus, the 246-residue chain is Transmembrane protein 41 homolog (246 aa).

The next 6 membrane-spanning stretches (helical) occupy residues 12 to 32 (WLVL…YSNF), 68 to 88 (SVVL…AIPG), 101 to 123 (PFYV…CYTI), 159 to 179 (IFLR…SPVL), 182 to 202 (PLAP…FLYI), and 219 to 239 (SWSS…PILL).

It belongs to the TMEM41 family.

It localises to the membrane. The sequence is that of Transmembrane protein 41 homolog (tag-175) from Caenorhabditis elegans.